A 450-amino-acid polypeptide reads, in one-letter code: Phosphoglucosamine mutase (450 aa).

The active-site Phosphoserine intermediate is Ser-102. 4 residues coordinate Mg(2+): Ser-102, Asp-243, Asp-245, and Asp-247. The residue at position 102 (Ser-102) is a Phosphoserine.

The protein belongs to the phosphohexose mutase family. Requires Mg(2+) as cofactor. In terms of processing, activated by phosphorylation.

The catalysed reaction is alpha-D-glucosamine 1-phosphate = D-glucosamine 6-phosphate. Functionally, catalyzes the conversion of glucosamine-6-phosphate to glucosamine-1-phosphate. In Rhizobium etli (strain ATCC 51251 / DSM 11541 / JCM 21823 / NBRC 15573 / CFN 42), this protein is Phosphoglucosamine mutase.